The sequence spans 314 residues: Mitochondrial 2-oxoglutarate/malate carrier protein (314 aa).

Ala2 bears the N-acetylalanine mark. Phosphoserine is present on Ser6. Solcar repeat units follow at residues Val23 to Arg108, Pro117 to Phe208, and Asp217 to Ala306. Residues Lys24–Leu42 form a helical membrane-spanning segment. N6-succinyllysine is present on Lys57. Lys73 bears the N6-acetyllysine mark. A helical membrane pass occupies residues Gly83–Ile101. Tyr102 is modified (phosphotyrosine). A run of 3 helical transmembrane segments spans residues Phe119 to Ala140, Gly183 to Tyr202, and His222 to Val240. Lys256 is modified (N6-acetyllysine). A helical membrane pass occupies residues Gly281–Leu300.

This sequence belongs to the mitochondrial carrier (TC 2.A.29) family. In terms of assembly, interacts with SMIM26.

The protein localises to the mitochondrion inner membrane. It catalyses the reaction (S)-malate(in) + 2-oxoglutarate(out) = (S)-malate(out) + 2-oxoglutarate(in). It carries out the reaction malonate(in) + 2-oxoglutarate(out) = malonate(out) + 2-oxoglutarate(in). The enzyme catalyses succinate(in) + 2-oxoglutarate(out) = succinate(out) + 2-oxoglutarate(in). The catalysed reaction is maleate(in) + 2-oxoglutarate(out) = maleate(out) + 2-oxoglutarate(in). It catalyses the reaction oxaloacetate(in) + 2-oxoglutarate(out) = oxaloacetate(out) + 2-oxoglutarate(in). Its function is as follows. Catalyzes the transport of 2-oxoglutarate (alpha-oxoglutarate) across the inner mitochondrial membrane in an electroneutral exchange for malate. Can also exchange 2-oxoglutarate for other dicarboxylic acids such as malonate, succinate, maleate and oxaloacetate, although with lower affinity. Contributes to several metabolic processes, including the malate-aspartate shuttle, the oxoglutarate/isocitrate shuttle, in gluconeogenesis from lactate, and in nitrogen metabolism. Maintains mitochondrial fusion and fission events, and the organization and morphology of cristae. Involved in the regulation of apoptosis. Helps protect from cytotoxic-induced apoptosis by modulating glutathione levels in mitochondria. This Mus musculus (Mouse) protein is Mitochondrial 2-oxoglutarate/malate carrier protein (Slc25a11).